The following is a 561-amino-acid chain: MACPF domain-containing protein CAD1 (561 aa).

An MACPF domain is found at 11–314 (VPSSEALTTT…PPIEDLQYFL (304 aa)). The segment at 489 to 514 (VASSGRLEPGGPSTSSSTEEVSGQSG) is disordered. The segment covering 500 to 513 (PSTSSSTEEVSGQS) has biased composition (polar residues).

Belongs to the complement C6/C7/C8/C9 (TC 1.C.39) family. As to expression, mainly expressed in the vascular system.

Its function is as follows. Negatively controls the salicylic acid (SA)-mediated pathway of programmed cell death in plant immunity. In Arabidopsis thaliana (Mouse-ear cress), this protein is MACPF domain-containing protein CAD1 (CAD1).